The primary structure comprises 164 residues: UPF0114 protein Avin_40830 (164 aa).

4 consecutive transmembrane segments (helical) span residues 15-35, 53-73, 103-125, and 136-156; these read LLAPIYIGLSVALLALTLKFF, LILVLLSMIDMALVGGLLVMV, GSLKLKVAASIVAISSIHLLRVF, and LLWYVLIHMTFVVSAFVMSYL.

The protein belongs to the UPF0114 family.

The protein resides in the cell membrane. The chain is UPF0114 protein Avin_40830 from Azotobacter vinelandii (strain DJ / ATCC BAA-1303).